A 158-amino-acid polypeptide reads, in one-letter code: MSTVSYYTAEGLKKLKDELEQLKAIERPKASADIAEARDKGDLSENAEYDAAKEAQGLLELKIKKMEEVYSNARLIDESQLDVSKALVLSHVKIKNQSNGMEMSYHLVAESEADLKTGKISVTSPIGKGLLGKSVGEIAEITVPNGILKFEVLEITRD.

The stretch at Ala-47–Glu-68 forms a coiled coil.

This sequence belongs to the GreA/GreB family.

Its function is as follows. Necessary for efficient RNA polymerase transcription elongation past template-encoded arresting sites. The arresting sites in DNA have the property of trapping a certain fraction of elongating RNA polymerases that pass through, resulting in locked ternary complexes. Cleavage of the nascent transcript by cleavage factors such as GreA or GreB allows the resumption of elongation from the new 3'terminus. GreA releases sequences of 2 to 3 nucleotides. The sequence is that of Transcription elongation factor GreA from Flavobacterium psychrophilum (strain ATCC 49511 / DSM 21280 / CIP 103535 / JIP02/86).